Consider the following 750-residue polypeptide: Photosystem I P700 chlorophyll a apoprotein A1 (750 aa).

A run of 8 helical transmembrane segments spans residues 70-93 (VFSAHFGQLSIIFLWLSGMYFHGA), 156-179 (LYCTAIGALVFAALMLFAGWFHYH), 195-219 (LNHHLAGLLGLGSLSWAGHQVHVSL), 291-309 (IAHHHLAIAILFLIAGHMY), 346-369 (WHAQLSLNLAMLGSLTIVVAHHMY), 385-411 (LSLFTHHMWIGGFLIVGAAAHAAIFMV), 433-455 (AIISHLNWVCIFLGFHSFGLYIH), and 531-549 (FLVHHIHAFTIHVTVLILL). Residues C573 and C582 each coordinate [4Fe-4S] cluster. Helical transmembrane passes span 589 to 610 (HVFLGLFWMYNAISVVIFHFSW) and 664 to 686 (LSAYGLFFLGAHFVWAFSLMFLF). H675 serves as a coordination point for chlorophyll a'. Residues M683 and Y691 each coordinate chlorophyll a. W692 is a phylloquinone binding site. Residues 724–744 (AVGVTHYLLGGIATTWAFFLA) traverse the membrane as a helical segment.

The protein belongs to the PsaA/PsaB family. As to quaternary structure, the PsaA/B heterodimer binds the P700 chlorophyll special pair and subsequent electron acceptors. PSI consists of a core antenna complex that captures photons, and an electron transfer chain that converts photonic excitation into a charge separation. The eukaryotic PSI reaction center is composed of at least 11 subunits. Requires P700 is a chlorophyll a/chlorophyll a' dimer, A0 is one or more chlorophyll a, A1 is one or both phylloquinones and FX is a shared 4Fe-4S iron-sulfur center. as cofactor.

The protein resides in the plastid. It is found in the chloroplast thylakoid membrane. It carries out the reaction reduced [plastocyanin] + hnu + oxidized [2Fe-2S]-[ferredoxin] = oxidized [plastocyanin] + reduced [2Fe-2S]-[ferredoxin]. Functionally, psaA and PsaB bind P700, the primary electron donor of photosystem I (PSI), as well as the electron acceptors A0, A1 and FX. PSI is a plastocyanin-ferredoxin oxidoreductase, converting photonic excitation into a charge separation, which transfers an electron from the donor P700 chlorophyll pair to the spectroscopically characterized acceptors A0, A1, FX, FA and FB in turn. Oxidized P700 is reduced on the lumenal side of the thylakoid membrane by plastocyanin. The protein is Photosystem I P700 chlorophyll a apoprotein A1 of Eucalyptus globulus subsp. globulus (Tasmanian blue gum).